Here is a 584-residue protein sequence, read N- to C-terminus: Cytosolic Fe-S cluster assembly factor NAR1 (584 aa).

Residues cysteine 20, cysteine 81, cysteine 84, cysteine 87, cysteine 190, cysteine 245, cysteine 465, and cysteine 469 each contribute to the [4Fe-4S] cluster site.

Belongs to the NARF family.

Functionally, component of the cytosolic Fe/S protein assembly machinery. Required for maturation of extramitochondrial Fe/S proteins. May play a role in the transfer of pre-assembled Fe/S clusters to target apoproteins. This is Cytosolic Fe-S cluster assembly factor NAR1 (NAR1) from Candida dubliniensis (strain CD36 / ATCC MYA-646 / CBS 7987 / NCPF 3949 / NRRL Y-17841) (Yeast).